A 130-amino-acid polypeptide reads, in one-letter code: Large ribosomal subunit protein bL19 (130 aa).

Belongs to the bacterial ribosomal protein bL19 family.

Its function is as follows. This protein is located at the 30S-50S ribosomal subunit interface and may play a role in the structure and function of the aminoacyl-tRNA binding site. The polypeptide is Large ribosomal subunit protein bL19 (Cupriavidus metallidurans (strain ATCC 43123 / DSM 2839 / NBRC 102507 / CH34) (Ralstonia metallidurans)).